Here is a 423-residue protein sequence, read N- to C-terminus: Tyrosine--tRNA ligase (423 aa).

Position 35 (tyrosine 35) interacts with L-tyrosine. The 'HIGH' region signature appears at 40–49; sequence PTAPSLHAGH. Residues tyrosine 170 and glutamine 174 each coordinate L-tyrosine. A 'KMSKS' region motif is present at residues 230–234; it reads KFGKS. Residue lysine 233 coordinates ATP. The region spanning 355-412 is the S4 RNA-binding domain; it reads DLITDLLVATGLSASKGAARRTIAEGGVSVNNMKIDSDEWTPQASDFLHGRWLVLRRG.

Belongs to the class-I aminoacyl-tRNA synthetase family. TyrS type 1 subfamily. In terms of assembly, homodimer.

It is found in the cytoplasm. It carries out the reaction tRNA(Tyr) + L-tyrosine + ATP = L-tyrosyl-tRNA(Tyr) + AMP + diphosphate + H(+). Catalyzes the attachment of tyrosine to tRNA(Tyr) in a two-step reaction: tyrosine is first activated by ATP to form Tyr-AMP and then transferred to the acceptor end of tRNA(Tyr). In Mycobacterium sp. (strain KMS), this protein is Tyrosine--tRNA ligase.